We begin with the raw amino-acid sequence, 165 residues long: Ureidoglycolate lyase (165 aa).

This sequence belongs to the ureidoglycolate lyase family. As to quaternary structure, homodimer. It depends on Ni(2+) as a cofactor.

It carries out the reaction (S)-ureidoglycolate = urea + glyoxylate. Its pathway is nitrogen metabolism; (S)-allantoin degradation. Functionally, catalyzes the catabolism of the allantoin degradation intermediate (S)-ureidoglycolate, generating urea and glyoxylate. Involved in the utilization of allantoin as nitrogen source. The chain is Ureidoglycolate lyase from Chelativorans sp. (strain BNC1).